The chain runs to 80 residues: Acyl carrier protein (80 aa).

The 76-residue stretch at 4 to 79 (DEIFSKVRSI…DVVNFIKKRK (76 aa)) folds into the Carrier domain. Ser39 is modified (O-(pantetheine 4'-phosphoryl)serine).

It belongs to the acyl carrier protein (ACP) family. In terms of processing, 4'-phosphopantetheine is transferred from CoA to a specific serine of apo-ACP by AcpS. This modification is essential for activity because fatty acids are bound in thioester linkage to the sulfhydryl of the prosthetic group.

The protein resides in the cytoplasm. It functions in the pathway lipid metabolism; fatty acid biosynthesis. In terms of biological role, carrier of the growing fatty acid chain in fatty acid biosynthesis. This chain is Acyl carrier protein, found in Borrelia garinii subsp. bavariensis (strain ATCC BAA-2496 / DSM 23469 / PBi) (Borreliella bavariensis).